We begin with the raw amino-acid sequence, 778 residues long: Jhy protein homolog (778 aa).

Disordered stretches follow at residues Asp62–Asp271, Gln334–Ser408, Glu631–Asp654, and Ile721–Glu746. A compositionally biased stretch (basic and acidic residues) spans Pro118–Gly139. Residues Ser223–Ser234 show a composition bias toward low complexity. A compositionally biased stretch (polar residues) spans Gln334–Pro344. Over residues Ser358–Lys371 the composition is skewed to basic residues. Residues Gly375–Gly389 show a composition bias toward polar residues. Positions Asn390–Asn402 are enriched in low complexity. A compositionally biased stretch (basic residues) spans Gly633–Tyr650. The segment covering Ala733 to Glu746 has biased composition (basic and acidic residues).

Its function is as follows. Required for the normal development of cilia in brain ependymal cells lining the ventricular surfaces. This Homo sapiens (Human) protein is Jhy protein homolog.